The sequence spans 306 residues: UDP-N-acetylenolpyruvoylglucosamine reductase (306 aa).

Residues Val34–Ser198 enclose the FAD-binding PCMH-type domain. Arg177 is a catalytic residue. The Proton donor role is filled by Ser227. Glu297 is an active-site residue.

Belongs to the MurB family. FAD serves as cofactor.

It localises to the cytoplasm. The enzyme catalyses UDP-N-acetyl-alpha-D-muramate + NADP(+) = UDP-N-acetyl-3-O-(1-carboxyvinyl)-alpha-D-glucosamine + NADPH + H(+). It participates in cell wall biogenesis; peptidoglycan biosynthesis. In terms of biological role, cell wall formation. The sequence is that of UDP-N-acetylenolpyruvoylglucosamine reductase from Clostridium botulinum (strain Okra / Type B1).